The chain runs to 570 residues: Polypeptide N-acetylgalactosaminyltransferase 2 (570 aa).

Topologically, residues 1–6 (MRRRSR) are cytoplasmic. Residues 7–24 (MLLCFALLWVLGIAYYMY) traverse the membrane as a helical; Signal-anchor for type II membrane protein segment. Topologically, residues 25-570 (SGGGSALAAG…QWKFSLNLQQ (546 aa)) are lumenal. Ser29 carries O-linked (Xyl...) (chondroitin sulfate) serine glycosylation. 4 disulfides stabilise this stretch: Cys125–Cys353, Cys344–Cys422, Cys455–Cys472, and Cys495–Cys512. The tract at residues 134 to 239 (LPATSVVITF…ERWLEPLLER (106 aa)) is catalytic subdomain A. The substrate site is built by Thr142, Asp175, and Arg200. A Mn(2+)-binding site is contributed by Asp223. A substrate-binding site is contributed by Ser224. His225 is a Mn(2+) binding site. The segment at 299-361 (PIKTPMIAGG…PCSRVGHVFR (63 aa)) is catalytic subdomain B. Trp330 contributes to the substrate binding site. Position 358 (His358) interacts with Mn(2+). Positions 361, 364, and 366 each coordinate substrate. A Ricin B-type lectin domain is found at 442–565 (QDIAFGALQQ…PALSQQWKFS (124 aa)). N-linked (GlcNAc...) asparagine glycosylation occurs at Asn515. Position 535 is a phosphoserine (Ser535). Cys538 and Cys554 are joined by a disulfide.

It belongs to the glycosyltransferase 2 family. GalNAc-T subfamily. It depends on Mn(2+) as a cofactor. In terms of tissue distribution, widely expressed at high level.

The protein localises to the golgi apparatus. Its subcellular location is the golgi stack membrane. It is found in the secreted. The catalysed reaction is L-seryl-[protein] + UDP-N-acetyl-alpha-D-galactosamine = a 3-O-[N-acetyl-alpha-D-galactosaminyl]-L-seryl-[protein] + UDP + H(+). The enzyme catalyses L-threonyl-[protein] + UDP-N-acetyl-alpha-D-galactosamine = a 3-O-[N-acetyl-alpha-D-galactosaminyl]-L-threonyl-[protein] + UDP + H(+). It functions in the pathway protein modification; protein glycosylation. Catalyzes the initial reaction in O-linked oligosaccharide biosynthesis, the transfer of an N-acetyl-D-galactosamine residue to a serine or threonine residue on the protein receptor. Has a broad spectrum of substrates for peptides such as EA2, Muc5AC, Muc1a, Muc1b. Probably involved in O-linked glycosylation of the immunoglobulin A1 (IgA1) hinge region. Involved in O-linked glycosylation of APOC-III, ANGPTL3 and PLTP. It participates in the regulation of HDL-C metabolism. The polypeptide is Polypeptide N-acetylgalactosaminyltransferase 2 (Galnt2) (Mus musculus (Mouse)).